Reading from the N-terminus, the 382-residue chain is Mannitol-1-phosphate 5-dehydrogenase (382 aa).

3–14 serves as a coordination point for NAD(+); that stretch reads AIHFGAGNIGRG.

This sequence belongs to the mannitol dehydrogenase family.

The catalysed reaction is D-mannitol 1-phosphate + NAD(+) = beta-D-fructose 6-phosphate + NADH + H(+). The sequence is that of Mannitol-1-phosphate 5-dehydrogenase from Psychromonas ingrahamii (strain DSM 17664 / CCUG 51855 / 37).